The following is a 369-amino-acid chain: uncharacterized protein (369 aa).

Lysine 184 bears the N6-(pyridoxal phosphate)lysine mark.

Belongs to the class-V pyridoxal-phosphate-dependent aminotransferase family. It depends on pyridoxal 5'-phosphate as a cofactor.

This is an uncharacterized protein from Helicobacter pylori (strain ATCC 700392 / 26695) (Campylobacter pylori).